The sequence spans 235 residues: Protein C1orf43 homolog (235 aa).

Residues Val-11–Val-31 form a helical membrane-spanning segment.

It localises to the membrane. The protein resides in the golgi apparatus. Its subcellular location is the mitochondrion. In terms of biological role, general regulator of phagocytosis. Required to uptake Gram negative bacterium by macrophages. The chain is Protein C1orf43 homolog from Rattus norvegicus (Rat).